Here is a 332-residue protein sequence, read N- to C-terminus: Abscisic acid-inducible protein kinase (332 aa).

ATP is bound by residues 1–8 (GSGNFGVA) and Lys-23. The Protein kinase domain maps to 1-250 (GSGNFGVAKL…IPEIKNHPWF (250 aa)). The Proton acceptor role is filled by Asp-113.

The protein belongs to the protein kinase superfamily. Ser/Thr protein kinase family. Post-translationally, autophosphorylated.

The enzyme catalyses L-seryl-[protein] + ATP = O-phospho-L-seryl-[protein] + ADP + H(+). It catalyses the reaction L-threonyl-[protein] + ATP = O-phospho-L-threonyl-[protein] + ADP + H(+). In terms of biological role, involved in water-stress responses. The protein is Abscisic acid-inducible protein kinase of Triticum aestivum (Wheat).